The following is a 477-amino-acid chain: Oleate hydroxylase FAH12 (477 aa).

A disordered region spans residues 26-48; that stretch reads YESSAAVSPAESPRTSASSTSLS. The span at 27–48 shows a compositional bias: low complexity; it reads ESSAAVSPAESPRTSASSTSLS. Helical transmembrane passes span 101–118 and 133–153; these read AYVL…YLFH and FVLW…LWVI. The Histidine box-1 signature appears at 155-159; that stretch reads HECGH. The helical transmembrane segment at 167–187 threads the bilayer; the sequence is FISDLTGWVIHSALLVPYFSW. The short motif at 191–195 is the Histidine box-2 element; that stretch reads HSAHH. 3 helical membrane passes run 234 to 254, 299 to 319, and 327 to 347; these read PIYT…SYLM, YIVL…YLGN, and AVWY…ITFL.

The protein belongs to the fatty acid desaturase type 1 family.

The protein localises to the microsome membrane. It catalyses the reaction (9Z)-octadecenoate + AH2 + O2 = (12R)-hydroxy-(9Z)-octadecenoate + A + H2O. The protein operates within lipid metabolism; monounsaturated fatty acid biosynthesis. In terms of biological role, oleate hydroxylase involved in the biosynthesis of ricinoleate (12-hydroxy-cis-9-octadecenoate), that is present at high levels in C.purpurea sclerotium tissue. Exhibits delta(12) hydroxylase activity on 16C and 18C monounsaturated fatty acids (i.e. oleic and palmitoleic acids), and, to a lower extent, gamma(3) hydroxylase activity on ricinoleate. The chain is Oleate hydroxylase FAH12 from Claviceps purpurea (Ergot fungus).